The sequence spans 199 residues: Ribonuclease P protein subunit p25 (199 aa).

Over residues 1–11 the composition is skewed to basic and acidic residues; that stretch reads MENFRKVRSEE. 2 disordered regions span residues 1-31 and 146-199; these read MENF…FADL and PRQL…DRTA. The residue at position 172 (Ser-172) is a Phosphoserine. The span at 190 to 199 shows a compositional bias: acidic residues; it reads PEAENEDRTA.

The protein belongs to the histone-like Alba family. As to quaternary structure, component of nuclear RNase P and RNase MRP ribonucleoproteins. RNase P consists of a catalytic RNA moiety and 10 different protein chains; POP1, POP4, POP5, POP7, RPP14, RPP21, RPP25, RPP30, RPP38 and RPP40. Within the RNase P complex, POP1, POP7 and RPP25 form the 'finger' subcomplex, POP5, RPP14, RPP40 and homodimeric RPP30 form the 'palm' subcomplex, and RPP21, POP4 and RPP38 form the 'wrist' subcomplex. All subunits of the RNase P complex interact with the catalytic RNA. Several subunits of RNase P are also part of the RNase MRP complex. RNase MRP consists of a catalytic RNA moiety and about 8 protein subunits; POP1, POP7, RPP25, RPP30, RPP38, RPP40 and possibly also POP4 and POP5. POP7 forms a heterodimer with RPP25 that binds to the P3 stem loop of the catalytic RNA.

The protein resides in the nucleus. It localises to the nucleolus. Its function is as follows. Component of ribonuclease P, a ribonucleoprotein complex that generates mature tRNA molecules by cleaving their 5'-ends. Also a component of the MRP ribonuclease complex, which cleaves pre-rRNA sequences. The sequence is that of Ribonuclease P protein subunit p25 (Rpp25) from Mus musculus (Mouse).